The chain runs to 163 residues: CASP-like protein 1C3 (163 aa).

Residues 1–6 (MAKIKK) lie on the Cytoplasmic side of the membrane. The helical transmembrane segment at 7–27 (IFTNFLRLLALAATVVAIVFM) threads the bilayer. The Extracellular segment spans residues 28 to 52 (VTSHDSAQVLNLTFTVKYSNTPVFK). A glycan (N-linked (GlcNAc...) asparagine) is linked at Asn-38. Residues 53–73 (YFVIAEAIAGGYIVISILLSF) traverse the membrane as a helical segment. Residues 74–79 (KSLFWR) are Cytoplasmic-facing. A helical membrane pass occupies residues 80–100 (LLVILDMVTAVLLTSSISAAL). Topologically, residues 101–128 (AIAQVGKKGNTHAGWLPVCEQVPDFCDQ) are extracellular. Residues 129–149 (VTIALIAGFAAAIIYFVLLLC) form a helical membrane-spanning segment. The Cytoplasmic segment spans residues 150-163 (SLYVVLSPIFVVTP).

This sequence belongs to the Casparian strip membrane proteins (CASP) family. As to quaternary structure, homodimer and heterodimers.

It is found in the cell membrane. The chain is CASP-like protein 1C3 from Populus trichocarpa (Western balsam poplar).